The primary structure comprises 428 residues: Large envelope protein (428 aa).

Residue G2 is the site of N-myristoyl glycine; by host attachment. Positions 2-145 (GNNIKVTFDP…PPLRDTHPHL (144 aa)) are pre-S1. The segment at 2–204 (GNNIKVTFDP…PLTIGDPVLS (203 aa)) is pre-S. The Virion surface; in external conformation segment spans residues 2–211 (GNNIKVTFDP…VLSTEMSPSG (210 aa)). Topologically, residues 2–283 (GNNIKVTFDP…NGFRWMYLRR (282 aa)) are intravirion; in internal conformation. An N-linked (GlcNAc...) asparagine glycan is attached at N3. Positions 110-144 (RDIPRGIVPPQTPSNRDQRRKPTPLTPPLRDTHPH) are disordered. A pre-S2 region spans residues 146 to 204 (TMKNQTGHLQGFAEGLRALTTSDHHNSAYGDPFTTLSPVVPTVSTTLSPPLTIGDPVLS). A helical transmembrane segment spans residues 212–232 (LLGLLAGLQVVYFLWTKILTI). Topologically, residues 233–283 (AQSLDWWWTSLSFPGGIPECTGQNLQFQTCKHLPTSCPPTCNGFRWMYLRR) are intravirion; in external conformation. A helical transmembrane segment spans residues 284–304 (FIIYLLVLLLFLTFLLVLLDW). At 305 to 376 (KGLLPVCPMM…WALARFSWLS (72 aa)) the chain is on the virion surface side. N348 is a glycosylation site (N-linked (GlcNAc...) asparagine; by host). Residues 377 to 397 (LLVPLLQWLGGISLTVWLLLI) form a helical membrane-spanning segment. The Intravirion portion of the chain corresponds to 398–403 (WMIWFW). Residues 404–426 (GPVLMSILPPFIPIFALFFLIWA) form a helical membrane-spanning segment. At 427-428 (YI) the chain is on the virion surface side.

It belongs to the orthohepadnavirus major surface antigen family. In its internal form (Li-HBsAg), interacts with the capsid protein and with the isoform S. Interacts with host chaperone CANX. In terms of assembly, associates with host chaperone CANX through its pre-S2 N glycan; this association may be essential for isoform M proper secretion. As to quaternary structure, interacts with isoform L. Interacts with the antigens of satellite virus HDV (HDVAgs); this interaction is required for encapsidation of HDV genomic RNA. Post-translationally, isoform M is N-terminally acetylated by host at a ratio of 90%, and N-glycosylated by host at the pre-S2 region. Myristoylated.

The protein resides in the virion membrane. Functionally, the large envelope protein exists in two topological conformations, one which is termed 'external' or Le-HBsAg and the other 'internal' or Li-HBsAg. In its external conformation the protein attaches the virus to cell receptors and thereby initiating infection. This interaction determines the species specificity and liver tropism. This attachment induces virion internalization predominantly through caveolin-mediated endocytosis. The large envelope protein also assures fusion between virion membrane and endosomal membrane. In its internal conformation the protein plays a role in virion morphogenesis and mediates the contact with the nucleocapsid like a matrix protein. In terms of biological role, the middle envelope protein plays an important role in the budding of the virion. It is involved in the induction of budding in a nucleocapsid independent way. In this process the majority of envelope proteins bud to form subviral lipoprotein particles of 22 nm of diameter that do not contain a nucleocapsid. In Ground squirrel hepatitis virus (strain 27) (GSHV), this protein is Large envelope protein.